The chain runs to 263 residues: Shikimate dehydrogenase (NADP(+)) (263 aa).

Shikimate is bound by residues 16 to 18 (SKS) and Thr65. Residue Lys69 is the Proton acceptor of the active site. Positions 90 and 105 each coordinate shikimate. NADP(+)-binding positions include 125-129 (GSGGS) and Leu208. Tyr210 provides a ligand contact to shikimate. Residue Gly230 participates in NADP(+) binding.

It belongs to the shikimate dehydrogenase family. As to quaternary structure, homodimer.

The enzyme catalyses shikimate + NADP(+) = 3-dehydroshikimate + NADPH + H(+). Its pathway is metabolic intermediate biosynthesis; chorismate biosynthesis; chorismate from D-erythrose 4-phosphate and phosphoenolpyruvate: step 4/7. Involved in the biosynthesis of the chorismate, which leads to the biosynthesis of aromatic amino acids. Catalyzes the reversible NADPH linked reduction of 3-dehydroshikimate (DHSA) to yield shikimate (SA). This is Shikimate dehydrogenase (NADP(+)) from Helicobacter pylori (strain G27).